A 285-amino-acid chain; its full sequence is MTNHDLASLSQTIETAFEDREAVSTSTRGAIRDAVEAALNLLDSGKVRVAERGADGTWTVNQWLKKAVLLSFRLNPMELVKGGPGESVWWDKVASKFDGWSVNEFEKAGFRAVPNCVVRRSAYIAPNAILMPSFVNLGAYVGEGTMVDTWATVGSCAQIGKNVHLSGGVGIGGVLEPMQAGPTIIEDNCFIGARSEVVEGCIVREGSVLGMGVFIGKSTKIVDRATGEVTYGEVPPYSVVVAGSMPSGSTMANGQPAPNLYCAVIVKRVDEKTRSKTGINELLRD.

Substrate is bound by residues Arg-111 and Asp-148.

Belongs to the transferase hexapeptide repeat family. In terms of assembly, homotrimer.

It is found in the cytoplasm. It carries out the reaction (S)-2,3,4,5-tetrahydrodipicolinate + succinyl-CoA + H2O = (S)-2-succinylamino-6-oxoheptanedioate + CoA. It functions in the pathway amino-acid biosynthesis; L-lysine biosynthesis via DAP pathway; LL-2,6-diaminopimelate from (S)-tetrahydrodipicolinate (succinylase route): step 1/3. The chain is 2,3,4,5-tetrahydropyridine-2,6-dicarboxylate N-succinyltransferase from Sinorhizobium fredii (strain NBRC 101917 / NGR234).